Reading from the N-terminus, the 202-residue chain is MTSTQSVAVYATLILAIFCFNDIHCDPIAEARAAAFGEREARSAGEWKQFDVNGEKVEVNEQENREIIRQAGGDGVEGSVMVIDHAKGLIIWSIPRAGECYLIGGVDKQLPDAQELLHYFRSAQGSADGEGVQSALDYVKAEDRPVTDLNLLAPEVREACQGKSVYWLEKSSGDNNEPEKRRWCVYAYVRIRGVLVRYRRCW.

The N-terminal stretch at 1-25 (MTSTQSVAVYATLILAIFCFNDIHC) is a signal peptide. Positions 26–181 (DPIAEARAAA…SGDNNEPEKR (156 aa)) are excised as a propeptide. In terms of domain architecture, BRICHOS spans 73–168 (GDGVEGSVMV…ACQGKSVYWL (96 aa)). 2 disulfide bridges follow: C100/C160 and C184/C201.

Has antimicrobial activity against the Gram-negative bacteria E.coli and P.mirabilis, the Gram-positive bacterium L.monocytogenes and the yeast C.albicans. The protein is Arenicin-2 of Arenicola marina (Lugworm).